We begin with the raw amino-acid sequence, 341 residues long: L-threonine 3-dehydrogenase (341 aa).

Cys38 is a Zn(2+) binding site. Catalysis depends on charge relay system residues Thr40 and His43. Zn(2+) is bound by residues His63, Glu64, Cys93, Cys96, Cys99, and Cys107. Residues Ile175, Asp195, Arg200, 262–264 (LGI), and 286–287 (IY) each bind NAD(+).

This sequence belongs to the zinc-containing alcohol dehydrogenase family. As to quaternary structure, homotetramer. Zn(2+) is required as a cofactor.

The protein localises to the cytoplasm. The catalysed reaction is L-threonine + NAD(+) = (2S)-2-amino-3-oxobutanoate + NADH + H(+). Its pathway is amino-acid degradation; L-threonine degradation via oxydo-reductase pathway; glycine from L-threonine: step 1/2. Catalyzes the NAD(+)-dependent oxidation of L-threonine to 2-amino-3-ketobutyrate. The sequence is that of L-threonine 3-dehydrogenase from Salmonella choleraesuis (strain SC-B67).